Consider the following 156-residue polypeptide: MVMSLLWALLQDMVLAAIPALGFAMVFNVPMRALRYCALLGALGHGSRMLMIHFGMDIEPASLLASIMIGMIGINWSRWLLAHPKVFTVAAVIPMFPGISAYTAMISVVEISHLGYSEVLMSTMVTNFLKASFIVGSLSIGLSLPGLWLYRKRPGV.

4 helical membrane-spanning segments follow: residues 7 to 27, 54 to 74, 86 to 106, and 128 to 148; these read WALL…AMVF, FGMD…MIGI, VFTV…TAMI, and FLKA…PGLW.

The protein belongs to the ThrE exporter (TC 2.A.79) family. The transporter is composed of YjjB and YjjP.

It localises to the cell inner membrane. Its function is as follows. Involved in succinate export with YjjP. Both proteins are required for export. The polypeptide is Probable succinate transporter subunit YjjB (Yersinia enterocolitica serotype O:8 / biotype 1B (strain NCTC 13174 / 8081)).